Reading from the N-terminus, the 200-residue chain is DNA-directed RNA polymerase subunit 7-like protein (200 aa).

It belongs to the eukaryotic RPB7/RPC8 RNA polymerase subunit family.

The protein resides in the nucleus. This is DNA-directed RNA polymerase subunit 7-like protein (NRPB7L) from Arabidopsis thaliana (Mouse-ear cress).